The sequence spans 502 residues: Probable cytosol aminopeptidase (502 aa).

Mn(2+) contacts are provided by Lys-269 and Asp-274. Lys-281 is a catalytic residue. Positions 292, 351, and 353 each coordinate Mn(2+). Arg-355 is a catalytic residue.

It belongs to the peptidase M17 family. Mn(2+) is required as a cofactor.

It is found in the cytoplasm. It carries out the reaction Release of an N-terminal amino acid, Xaa-|-Yaa-, in which Xaa is preferably Leu, but may be other amino acids including Pro although not Arg or Lys, and Yaa may be Pro. Amino acid amides and methyl esters are also readily hydrolyzed, but rates on arylamides are exceedingly low.. The enzyme catalyses Release of an N-terminal amino acid, preferentially leucine, but not glutamic or aspartic acids.. Its function is as follows. Presumably involved in the processing and regular turnover of intracellular proteins. Catalyzes the removal of unsubstituted N-terminal amino acids from various peptides. This is Probable cytosol aminopeptidase from Vibrio campbellii (strain ATCC BAA-1116).